We begin with the raw amino-acid sequence, 126 residues long: MRHQKSGRKFNRTDAHRGAMFSNMIASLFKYQLIKTTLPKAKELRRFAEPLITLAKVDSVANRRLAFARLRNKEAVGILFSNLGPRYITRPGGYIRLLKCGFRHGDNAPMAYVEMLERPIIAEEVT.

Belongs to the bacterial ribosomal protein bL17 family. Part of the 50S ribosomal subunit. Contacts protein L32.

This chain is Large ribosomal subunit protein bL17, found in Xylella fastidiosa (strain Temecula1 / ATCC 700964).